Consider the following 24-residue polypeptide: Brevinin-1Bb (24 aa).

Cys18 and Cys24 are disulfide-bonded.

As to expression, expressed by the skin glands.

The protein localises to the secreted. Its function is as follows. Antibacterial activity against Gram-positive bacterium S.aureus and Gram-negative bacterium E.coli. Has activity against C.albicans. This Lithobates berlandieri (Rio Grande leopard frog) protein is Brevinin-1Bb.